The following is a 1035-amino-acid chain: Sulfite reductase [NADPH] flavoprotein component (1035 aa).

The 232-residue stretch at 648–879 (VKNFVVKVKE…VKPSVMKLPP (232 aa)) folds into the FAD-binding FR-type domain. Residues 684–695 (YDIGEALGIHAR) and 814–824 (LKRREYSIASS) each bind FAD.

The cofactor is FAD. FMN serves as cofactor.

It catalyses the reaction hydrogen sulfide + 3 NADP(+) + 3 H2O = sulfite + 3 NADPH + 4 H(+). It functions in the pathway sulfur metabolism; hydrogen sulfide biosynthesis; hydrogen sulfide from sulfite (NADPH route): step 1/1. Functionally, this enzyme catalyzes the 6-electron reduction of sulfite to sulfide. This is one of several activities required for the biosynthesis of L-cysteine from sulfate. The sequence is that of Sulfite reductase [NADPH] flavoprotein component (MET10) from Saccharomyces cerevisiae (strain ATCC 204508 / S288c) (Baker's yeast).